Consider the following 381-residue polypeptide: Homoserine O-succinyltransferase (381 aa).

The 316-residue stretch at 45 to 360 (NAVLVCHALN…PHGHDAFLLD (316 aa)) folds into the AB hydrolase-1 domain. The active-site Nucleophile is Ser-151. Arg-221 provides a ligand contact to substrate. Residues Asp-321 and His-354 contribute to the active site. Asp-355 serves as a coordination point for substrate.

Belongs to the AB hydrolase superfamily. MetX family. As to quaternary structure, homodimer.

It localises to the cytoplasm. The enzyme catalyses L-homoserine + succinyl-CoA = O-succinyl-L-homoserine + CoA. The protein operates within amino-acid biosynthesis; L-methionine biosynthesis via de novo pathway; O-succinyl-L-homoserine from L-homoserine: step 1/1. Transfers a succinyl group from succinyl-CoA to L-homoserine, forming succinyl-L-homoserine. In Burkholderia cenocepacia (strain HI2424), this protein is Homoserine O-succinyltransferase.